Here is a 191-residue protein sequence, read N- to C-terminus: Protein Ves (191 aa).

It belongs to the Ves family.

In Escherichia coli (strain SE11), this protein is Protein Ves.